The following is a 343-amino-acid chain: Methylthioribose-1-phosphate isomerase (343 aa).

Substrate contacts are provided by residues arginine 44 to alanine 46, arginine 85, and glutamine 192. Catalysis depends on aspartate 233, which acts as the Proton donor. Asparagine 243–lysine 244 is a binding site for substrate.

This sequence belongs to the eIF-2B alpha/beta/delta subunits family. MtnA subfamily.

It catalyses the reaction 5-(methylsulfanyl)-alpha-D-ribose 1-phosphate = 5-(methylsulfanyl)-D-ribulose 1-phosphate. It participates in amino-acid biosynthesis; L-methionine biosynthesis via salvage pathway; L-methionine from S-methyl-5-thio-alpha-D-ribose 1-phosphate: step 1/6. Its function is as follows. Catalyzes the interconversion of methylthioribose-1-phosphate (MTR-1-P) into methylthioribulose-1-phosphate (MTRu-1-P). The chain is Methylthioribose-1-phosphate isomerase from Carboxydothermus hydrogenoformans (strain ATCC BAA-161 / DSM 6008 / Z-2901).